The sequence spans 365 residues: Peptide chain release factor 2 (365 aa).

Position 252 is an N5-methylglutamine (Gln-252).

It belongs to the prokaryotic/mitochondrial release factor family. In terms of processing, methylated by PrmC. Methylation increases the termination efficiency of RF2.

The protein localises to the cytoplasm. Functionally, peptide chain release factor 2 directs the termination of translation in response to the peptide chain termination codons UGA and UAA. The polypeptide is Peptide chain release factor 2 (Shewanella baltica (strain OS223)).